We begin with the raw amino-acid sequence, 596 residues long: Linalool synthase TPS3, chloroplastic (596 aa).

Residues 1–39 (MISSLNPLFTTHRSGVIAQQFFASSAAASINSVSSLKIA) constitute a chloroplast transit peptide. 5 residues coordinate (2E)-geranyl diphosphate: R308, D345, D349, R486, and N489. Residues D345 and D349 each coordinate Mg(2+). Positions 345 to 349 (DDIYD) match the DDXXD motif motif. Residues N489, T493, and S497 each coordinate Mg(2+).

This sequence belongs to the terpene synthase family. Tpsb subfamily. In terms of assembly, monomer. Mg(2+) serves as cofactor. Requires Mn(2+) as cofactor. Expressed in flowers and fruits.

Its subcellular location is the plastid. It is found in the chloroplast. It carries out the reaction (2E)-geranyl diphosphate = beta-myrcene + diphosphate. The enzyme catalyses (2E)-geranyl diphosphate + H2O = linalool + diphosphate. The catalysed reaction is (2E)-geranyl diphosphate = (Z)-beta-ocimene + diphosphate. It catalyses the reaction (2E)-geranyl diphosphate = (E)-beta-ocimene + diphosphate. The protein operates within secondary metabolite biosynthesis; terpenoid biosynthesis. In terms of biological role, monoterpene synthase (mono-TPS) involved in the biosynthesis of monoterpenes natural products, constituent of coffee beverage aroma. Catalyzes the conversion of (2E)-geranyl diphosphate (GPP) into linalool and beta-myrcene, and, as minor products, cis-ocimene and trans-ocimene. Not able to use geranylgeranyl pyrophosphate (GGPP) and farnesyl pyrophosphate (FPP) as substrates. In Coffea arabica (Arabian coffee), this protein is Linalool synthase TPS3, chloroplastic.